Here is a 394-residue protein sequence, read N- to C-terminus: Protein LAX PANICLE 2 (394 aa).

Residues 1-193 (MVPARSLAHP…PTPRHHHHDV (193 aa)) form a disordered region. Residues 8-20 (AHPHPHLVRRRRD) show a composition bias toward basic residues. The span at 60–84 (QHDPPKQPPPREADDDHHRIQEREP) shows a compositional bias: basic and acidic residues. Composition is skewed to low complexity over residues 90–101 (TTTRNQRLQLQL), 119–131 (GTSGSSSGGSSSN), and 146–155 (GPASPGASAG). The segment covering 170-185 (APQPPTPTPTPTPTPT) has biased composition (pro residues).

As to quaternary structure, interacts with LAX1.

The protein localises to the nucleus. Its function is as follows. Involved in the regulation of shoot branching by controlling axillary meristem (AM) formation. Functions in association with LAX1 to regulate the process of AM formation. Possesses transactivation activity in yeast. This is Protein LAX PANICLE 2 from Oryza sativa subsp. japonica (Rice).